The primary structure comprises 262 residues: Probable lipoprotein EnvF (262 aa).

The signal sequence occupies residues 1–25 (MNKIHVTYKNLLLPITFIAATLISA). C26 is lipidated: N-palmitoyl cysteine. A lipid anchor (S-diacylglycerol cysteine) is attached at C26. Positions 227 to 262 (EAEKAQQLVEQSRKDIESQRKKAAGKMNEIQQTFKK) are disordered. Residues 237–246 (QSRKDIESQR) are compositionally biased toward basic and acidic residues.

The protein localises to the cell membrane. This Salmonella typhimurium (strain LT2 / SGSC1412 / ATCC 700720) protein is Probable lipoprotein EnvF (envF).